Here is a 91-residue protein sequence, read N- to C-terminus: Small ribosomal subunit protein bS16 (91 aa).

It belongs to the bacterial ribosomal protein bS16 family.

This chain is Small ribosomal subunit protein bS16, found in Ligilactobacillus salivarius (strain UCC118) (Lactobacillus salivarius).